Consider the following 265-residue polypeptide: uncharacterized protein (265 aa).

The signal sequence occupies residues 1-23 (MNYFRILYCSVLLFFSFFSCTSA). The NodB homology domain occupies 67–248 (KEIYLTFDNG…TLKQQGYTFK (182 aa)).

The protein belongs to the polysaccharide deacetylase family.

This is an uncharacterized protein from Geobacillus stearothermophilus (Bacillus stearothermophilus).